Reading from the N-terminus, the 248-residue chain is Probable transcriptional regulatory protein RPC_4807 (248 aa).

The disordered stretch occupies residues 1-21 (MAGHSQFKNIMHRKGRQDAQK).

It belongs to the TACO1 family.

The protein localises to the cytoplasm. This Rhodopseudomonas palustris (strain BisB18) protein is Probable transcriptional regulatory protein RPC_4807.